A 428-amino-acid polypeptide reads, in one-letter code: Histidine--tRNA ligase (428 aa).

Belongs to the class-II aminoacyl-tRNA synthetase family. In terms of assembly, homodimer.

It is found in the cytoplasm. The catalysed reaction is tRNA(His) + L-histidine + ATP = L-histidyl-tRNA(His) + AMP + diphosphate + H(+). The sequence is that of Histidine--tRNA ligase from Halalkalibacterium halodurans (strain ATCC BAA-125 / DSM 18197 / FERM 7344 / JCM 9153 / C-125) (Bacillus halodurans).